Consider the following 144-residue polypeptide: Large ribosomal subunit protein uL15 (144 aa).

The disordered stretch occupies residues 1–49 (MRLNTLSPAAGAKSAAKRVGRGIGSGLGKTAGRGHKGQKSRSGGGVRVG). Residues 21-31 (RGIGSGLGKTA) show a composition bias toward gly residues.

This sequence belongs to the universal ribosomal protein uL15 family. In terms of assembly, part of the 50S ribosomal subunit.

Its function is as follows. Binds to the 23S rRNA. The polypeptide is Large ribosomal subunit protein uL15 (Shewanella piezotolerans (strain WP3 / JCM 13877)).